A 435-amino-acid chain; its full sequence is tRNA(Ile)-lysidine synthase (435 aa).

ATP is bound at residue 25-30; it reads SGGLDS.

Belongs to the tRNA(Ile)-lysidine synthase family.

The protein localises to the cytoplasm. The enzyme catalyses cytidine(34) in tRNA(Ile2) + L-lysine + ATP = lysidine(34) in tRNA(Ile2) + AMP + diphosphate + H(+). Functionally, ligates lysine onto the cytidine present at position 34 of the AUA codon-specific tRNA(Ile) that contains the anticodon CAU, in an ATP-dependent manner. Cytidine is converted to lysidine, thus changing the amino acid specificity of the tRNA from methionine to isoleucine. In Photobacterium profundum (strain SS9), this protein is tRNA(Ile)-lysidine synthase.